Here is a 119-residue protein sequence, read N- to C-terminus: Large ribosomal subunit protein bL20 (119 aa).

This sequence belongs to the bacterial ribosomal protein bL20 family.

Binds directly to 23S ribosomal RNA and is necessary for the in vitro assembly process of the 50S ribosomal subunit. It is not involved in the protein synthesizing functions of that subunit. The protein is Large ribosomal subunit protein bL20 of Rhodopseudomonas palustris (strain ATCC BAA-98 / CGA009).